Reading from the N-terminus, the 297-residue chain is MLKVNNLSKIWKDFKLKNVSFEIDREYCVILGPSGAGKSVLIKCIAGILKPDSGRIILNGEDITNLPPEKRNVGYVPQNYALFPNKNVYKNIAYGLIIKKVNKLEIDRKVKEIAEFLNISHLLNRDVKTLSGGEQQRVALARALILNPSILLLDEPTSAVDIKIKESIISELKKIKHIPVLHITHDLAEARTLGEKVGIFMNGELIAFGDKSILKKPKNKKVAEFLGFNIIDDKAIAPEDVIIKDGNGGEVVNIIDYGKYKKVFVKYNGYIIKAFTERDLNIGDNVGLEFREQTKLT.

One can recognise an ABC transporter domain in the interval 2-226; it reads LKVNNLSKIW…PKNKKVAEFL (225 aa). 32–39 is a binding site for ATP; that stretch reads GPSGAGKS.

It belongs to the ABC transporter superfamily. Sulfate/tungstate importer (TC 3.A.1.6) family. As to quaternary structure, the complex is composed of two ATP-binding proteins (WtpC), two transmembrane proteins (WtpB) and a solute-binding protein (WtpA).

Its subcellular location is the cell membrane. It catalyses the reaction tungstate(in) + ATP + H2O = tungstate(out) + ADP + phosphate + H(+). Its function is as follows. Part of the ABC transporter complex WtpABC involved in molybdate/tungstate import. Responsible for energy coupling to the transport system. The polypeptide is Molybdate/tungstate import ATP-binding protein WtpC (wtpC) (Methanocaldococcus jannaschii (strain ATCC 43067 / DSM 2661 / JAL-1 / JCM 10045 / NBRC 100440) (Methanococcus jannaschii)).